The chain runs to 385 residues: Acetylornithine aminotransferase (385 aa).

Pyridoxal 5'-phosphate contacts are provided by residues Gly94 to Thr95 and Phe126. Arg129 serves as a coordination point for N(2)-acetyl-L-ornithine. A pyridoxal 5'-phosphate-binding site is contributed by Asp211–Gln214. Residue Lys240 is modified to N6-(pyridoxal phosphate)lysine. Thr267 is a N(2)-acetyl-L-ornithine binding site. Thr268 contributes to the pyridoxal 5'-phosphate binding site.

Belongs to the class-III pyridoxal-phosphate-dependent aminotransferase family. ArgD subfamily. In terms of assembly, homodimer. Requires pyridoxal 5'-phosphate as cofactor.

The protein localises to the cytoplasm. It carries out the reaction N(2)-acetyl-L-ornithine + 2-oxoglutarate = N-acetyl-L-glutamate 5-semialdehyde + L-glutamate. The protein operates within amino-acid biosynthesis; L-arginine biosynthesis; N(2)-acetyl-L-ornithine from L-glutamate: step 4/4. The protein is Acetylornithine aminotransferase of Thermotoga maritima (strain ATCC 43589 / DSM 3109 / JCM 10099 / NBRC 100826 / MSB8).